We begin with the raw amino-acid sequence, 379 residues long: Chorismate synthase (379 aa).

NADP(+)-binding residues include R48 and R54. FMN contacts are provided by residues 125–127 (RSS), 241–242 (NA), G286, 301–305 (KPTSS), and R327.

This sequence belongs to the chorismate synthase family. In terms of assembly, homotetramer. Requires FMNH2 as cofactor.

The enzyme catalyses 5-O-(1-carboxyvinyl)-3-phosphoshikimate = chorismate + phosphate. It participates in metabolic intermediate biosynthesis; chorismate biosynthesis; chorismate from D-erythrose 4-phosphate and phosphoenolpyruvate: step 7/7. In terms of biological role, catalyzes the anti-1,4-elimination of the C-3 phosphate and the C-6 proR hydrogen from 5-enolpyruvylshikimate-3-phosphate (EPSP) to yield chorismate, which is the branch point compound that serves as the starting substrate for the three terminal pathways of aromatic amino acid biosynthesis. This reaction introduces a second double bond into the aromatic ring system. The sequence is that of Chorismate synthase from Rhodospirillum centenum (strain ATCC 51521 / SW).